The following is a 32-amino-acid chain: METITYVFIFACIIALFFFAIFFREPPRITKK.

At Met1 the chain carries N-formylmethionine. The Lumenal segment spans residues 1–2; sequence ME. The helical transmembrane segment at 3-23 threads the bilayer; sequence TITYVFIFACIIALFFFAIFF. At 24–32 the chain is on the cytoplasmic side; sequence REPPRITKK.

Belongs to the PsbT family. As to quaternary structure, PSII is composed of 1 copy each of membrane proteins PsbA, PsbB, PsbC, PsbD, PsbE, PsbF, PsbH, PsbI, PsbJ, PsbK, PsbL, PsbM, PsbT, PsbX, PsbY, PsbZ, Psb30/Ycf12, PsbO, CyanoQ (PsbQ), PsbU, PsbV and a large number of cofactors. It forms dimeric complexes. Part of a photosystem II (PSII) assembly intermediate complex PSII-I; crystallized from a strain deleted of psbJ, it forms monomeric PSII before addition of the oxygen evolving complex. PSII-I includes 3 assembly factors not found in mature PSII (Psb27, Psb28 and Psb34). It depends on PSII binds multiple chlorophylls, carotenoids and specific lipids. as a cofactor.

The protein resides in the cellular thylakoid membrane. Found at the monomer-monomer interface of the photosystem II (PS II) dimer, plays a role in assembly and dimerization of PSII. PSII is a light-driven water plastoquinone oxidoreductase, using light energy to abstract electrons from H(2)O, generating a proton gradient subsequently used for ATP formation. The polypeptide is Photosystem II reaction center protein T (Thermosynechococcus vestitus (strain NIES-2133 / IAM M-273 / BP-1)).